Consider the following 333-residue polypeptide: COMPASS-like H3K4 histone methylase component WDR5B (333 aa).

8 WD repeats span residues 1-40 (MPSG…KTLE), 41-80 (GHTA…LIHR), 83-122 (GHSS…ECLK), 126-167 (GHTN…RMIK), 169-207 (HSMP…CLKT), 211-252 (DKSP…KVYT), 253-295 (GHTN…ILQR), and 298-333 (GHTD…KQDA).

Unlike WDR5A, does not interact with RBL or TRO.

The sequence is that of COMPASS-like H3K4 histone methylase component WDR5B from Arabidopsis thaliana (Mouse-ear cress).